Here is an 89-residue protein sequence, read N- to C-terminus: Small ribosomal subunit protein uS15 (89 aa).

The protein belongs to the universal ribosomal protein uS15 family. Part of the 30S ribosomal subunit. Forms a bridge to the 50S subunit in the 70S ribosome, contacting the 23S rRNA.

One of the primary rRNA binding proteins, it binds directly to 16S rRNA where it helps nucleate assembly of the platform of the 30S subunit by binding and bridging several RNA helices of the 16S rRNA. Its function is as follows. Forms an intersubunit bridge (bridge B4) with the 23S rRNA of the 50S subunit in the ribosome. This Corynebacterium urealyticum (strain ATCC 43042 / DSM 7109) protein is Small ribosomal subunit protein uS15.